A 720-amino-acid polypeptide reads, in one-letter code: 1-deoxy-D-xylulose-5-phosphate synthase 1, chloroplastic (720 aa).

The N-terminal 51 residues, 1-51, are a transit peptide targeting the chloroplast; the sequence is MALTTFSISRGGFVGALPQEGHFAPAAAELSLHKLQSRPHKARRRSSSSIS. Over residues 35–46 the composition is skewed to basic residues; sequence LQSRPHKARRRS. The disordered stretch occupies residues 35 to 74; that stretch reads LQSRPHKARRRSSSSISASLSTEREAAEYHSQRPPTPLLD. The span at 56-65 shows a compositional bias: basic and acidic residues; that stretch reads TEREAAEYHS. Thiamine diphosphate is bound by residues His142 and 183–185; that span reads GHS. Mg(2+) is bound at residue Asp214. Thiamine diphosphate contacts are provided by residues 215–216, Asn243, Tyr364, and Glu446; that span reads GA. Asn243 contacts Mg(2+).

This sequence belongs to the transketolase family. DXPS subfamily. Homodimer. Mg(2+) is required as a cofactor. It depends on thiamine diphosphate as a cofactor.

It localises to the plastid. The protein resides in the chloroplast stroma. The catalysed reaction is D-glyceraldehyde 3-phosphate + pyruvate + H(+) = 1-deoxy-D-xylulose 5-phosphate + CO2. Its pathway is metabolic intermediate biosynthesis; 1-deoxy-D-xylulose 5-phosphate biosynthesis; 1-deoxy-D-xylulose 5-phosphate from D-glyceraldehyde 3-phosphate and pyruvate: step 1/1. Functionally, catalyzes the acyloin condensation reaction between C atoms 2 and 3 of pyruvate and glyceraldehyde 3-phosphate to yield 1-deoxy-D-xylulose-5-phosphate (DXP). Is a limiting enzyme for plastidic isoprenoid biosynthesis and essential for chloroplast development. The polypeptide is 1-deoxy-D-xylulose-5-phosphate synthase 1, chloroplastic (CLA1) (Oryza sativa subsp. japonica (Rice)).